The sequence spans 453 residues: Anthocyanidin 3-O-glucosyltransferase (453 aa).

H17 functions as the Proton acceptor in the catalytic mechanism. An anthocyanidin is bound at residue H17. Catalysis depends on D117, which acts as the Charge relay. UDP-alpha-D-glucose is bound at residue T139. H148 lines the an anthocyanidin pocket. UDP-alpha-D-glucose contacts are provided by A331, Q333, H348, W351, N352, S353, and E356. Residue G371 coordinates an anthocyanidin. UDP-alpha-D-glucose contacts are provided by D372 and Q373.

Belongs to the UDP-glycosyltransferase family.

It carries out the reaction an anthocyanidin + UDP-alpha-D-glucose + H(+) = an anthocyanidin 3-O-beta-D-glucoside + UDP. The catalysed reaction is delphinidin + UDP-alpha-D-glucose = delphinidin 3-O-beta-D-glucoside + UDP. It catalyses the reaction pelargonidin + UDP-alpha-D-glucose = pelargonidin 3-O-beta-D-glucoside + UDP. The enzyme catalyses cyanidin + UDP-alpha-D-glucose = cyanidin 3-O-beta-D-glucoside + UDP + H(+). Its pathway is pigment biosynthesis; anthocyanin biosynthesis. In terms of biological role, in the presence of other necessary color factors, this glycosylation reaction allows the accumulation of anthocyanin pigments. Anthocyanidins are the preferred substrates, while flavonols are only a minor substrate in vitro. The polypeptide is Anthocyanidin 3-O-glucosyltransferase (Gentiana triflora (Clustered gentian)).